The primary structure comprises 187 residues: UPF0340 protein SP_0663 (187 aa).

The protein belongs to the UPF0340 family.

The protein is UPF0340 protein SP_0663 of Streptococcus pneumoniae serotype 4 (strain ATCC BAA-334 / TIGR4).